The sequence spans 307 residues: Taste receptor type 2 member 41 (307 aa).

Residues 1–7 (MQAALMA) are Extracellular-facing. A helical transmembrane segment spans residues 8-28 (FFMLLFSLLSLLGIAANGFIV). The Cytoplasmic segment spans residues 29–40 (LVLGREWLRYGR). A helical transmembrane segment spans residues 41–61 (LLPLDMILISLGASRXCLQLV). Residues 62-88 (GTVHNFYYSARKVEYSGGLGRQFFHLH) are Extracellular-facing. Residues 89 to 109 (WHFLNSATFWFCSWLSVLFCV) traverse the membrane as a helical segment. The Cytoplasmic segment spans residues 110–129 (KIANITHPTFLWLKWRFPGW). The chain crosses the membrane as a helical span at residues 130 to 150 (VPWLLLGSVLISFIITLLFFW). Residues 151–183 (VNYPVYQELLIRKFSGNMTYKWNTRIETYYFPS) lie on the Extracellular side of the membrane. N167 carries an N-linked (GlcNAc...) asparagine glycan. A helical membrane pass occupies residues 184–204 (LKLVIWSIPFSVFLVSIMLLI). Topologically, residues 205–234 (NSLRRHTQRMQHNGHSLQDPSTQAHTRALK) are cytoplasmic. A helical membrane pass occupies residues 235–255 (SLISFLFLYALSFLSLIIDAT). Topologically, residues 256 to 264 (KFISMQNDF) are extracellular. A helical membrane pass occupies residues 265–285 (YWPWQIAVYLCISVHPFILIF). Residues 286–307 (SNLKLRSMFWQVLLLARGFWVA) are Cytoplasmic-facing.

This sequence belongs to the G-protein coupled receptor T2R family.

The protein resides in the membrane. Functionally, receptor that may play a role in the perception of bitterness and is gustducin-linked. May play a role in sensing the chemical composition of the gastrointestinal content. The activity of this receptor may stimulate alpha gustducin, mediate PLC-beta-2 activation and lead to the gating of TRPM5. The sequence is that of Taste receptor type 2 member 41 (TAS2R41) from Gorilla gorilla gorilla (Western lowland gorilla).